The sequence spans 111 residues: Small ribosomal subunit protein bS16 (111 aa).

Residues 92 to 111 (EKGVKESNEIVEPEGEEVKE) form a disordered region. A compositionally biased stretch (acidic residues) spans 100–111 (EIVEPEGEEVKE).

Belongs to the bacterial ribosomal protein bS16 family.

This chain is Small ribosomal subunit protein bS16, found in Petrotoga mobilis (strain DSM 10674 / SJ95).